We begin with the raw amino-acid sequence, 199 residues long: TATA-box-binding protein (199 aa).

2 tandem repeats follow at residues 10 to 86 and 101 to 177.

Belongs to the TBP family.

General factor that plays a role in the activation of archaeal genes transcribed by RNA polymerase. Binds specifically to the TATA box promoter element which lies close to the position of transcription initiation. The polypeptide is TATA-box-binding protein (Pyrobaculum aerophilum (strain ATCC 51768 / DSM 7523 / JCM 9630 / CIP 104966 / NBRC 100827 / IM2)).